Consider the following 246-residue polypeptide: O-antigen export system ATP-binding protein RfbB (246 aa).

One can recognise an ABC transporter domain in the interval 22–246 (SGIKDLVFHP…IIELYKQAMA (225 aa)). Residue 63–70 (GRNGAGKS) coordinates ATP.

The protein belongs to the ABC transporter superfamily.

The protein localises to the cell inner membrane. Its function is as follows. May form an ATP-driven O-antigen export apparatus, in association with RfbA. The polypeptide is O-antigen export system ATP-binding protein RfbB (rfbB) (Klebsiella pneumoniae).